We begin with the raw amino-acid sequence, 117 residues long: Holo-[acyl-carrier-protein] synthase (117 aa).

Mg(2+)-binding residues include aspartate 8 and glutamate 58.

The protein belongs to the P-Pant transferase superfamily. AcpS family. It depends on Mg(2+) as a cofactor.

The protein localises to the cytoplasm. The enzyme catalyses apo-[ACP] + CoA = holo-[ACP] + adenosine 3',5'-bisphosphate + H(+). In terms of biological role, transfers the 4'-phosphopantetheine moiety from coenzyme A to a Ser of acyl-carrier-protein. The polypeptide is Holo-[acyl-carrier-protein] synthase (Staphylococcus epidermidis (strain ATCC 35984 / DSM 28319 / BCRC 17069 / CCUG 31568 / BM 3577 / RP62A)).